A 1483-amino-acid polypeptide reads, in one-letter code: Chromosome partition protein MukB (1483 aa).

An ATP-binding site is contributed by 34–41 (GGNGAGKS). 2 coiled-coil regions span residues 311–426 (EMAR…LQRA) and 547–607 (GQQV…WLAA). The segment at 666-783 (PGGSEDARLN…KVPLFGRAAR (118 aa)) is flexible hinge. 2 coiled-coil regions span residues 835-1115 (EAAL…SAKA) and 1206-1266 (DDPV…QAVS). The interval 850–870 (RELNNHESENQQQRQQYEQAK) is disordered.

This sequence belongs to the SMC family. MukB subfamily. In terms of assembly, homodimerization via its hinge domain. Binds to DNA via its C-terminal region. Interacts, and probably forms a ternary complex, with MukE and MukF via its C-terminal region. The complex formation is stimulated by calcium or magnesium. Interacts with tubulin-related protein FtsZ.

The protein localises to the cytoplasm. The protein resides in the nucleoid. In terms of biological role, plays a central role in chromosome condensation, segregation and cell cycle progression. Functions as a homodimer, which is essential for chromosome partition. Involved in negative DNA supercoiling in vivo, and by this means organize and compact chromosomes. May achieve or facilitate chromosome segregation by condensation DNA from both sides of a centrally located replisome during cell division. This is Chromosome partition protein MukB from Erwinia tasmaniensis (strain DSM 17950 / CFBP 7177 / CIP 109463 / NCPPB 4357 / Et1/99).